A 211-amino-acid polypeptide reads, in one-letter code: Proline-rich 33 kDa extensin-related protein (211 aa).

An N-terminal signal peptide occupies residues 1 to 14 (AILGVAIFAAPSLA). Composition is skewed to pro residues over residues 25–59 (PPVYTPPVHKPPIHKPPVYTPPVHKPPVYTPPVHK) and 82–93 (HKPPVYKPPVQK). Residues 25-211 (PPVYTPPVHK…RHPPVENTGN (187 aa)) are disordered. Composition is skewed to basic residues over residues 101–111 (PVHKPPIHKPP) and 127–139 (PIHKPQPIHRPPV). Composition is skewed to basic and acidic residues over residues 142–159 (PPTEHKPPVHEPATEHKP) and 167–177 (KTEKPVPEHKP). A compositionally biased stretch (pro residues) spans 179–198 (HLPPIVVRPPPTHKPNPPYG).

This sequence belongs to the plant proline-rich protein superfamily. ENOD12 family.

It is found in the secreted. It localises to the cell wall. This Daucus carota (Wild carrot) protein is Proline-rich 33 kDa extensin-related protein.